We begin with the raw amino-acid sequence, 335 residues long: Vitamin B12 import system permease protein BtuC (335 aa).

8 helical membrane passes run 25 to 45, 67 to 87, 94 to 113, 117 to 139, 153 to 173, 243 to 263, 281 to 301, and 309 to 329; these read LVVM…VWIW, MAVI…QALF, PGLL…AVLL, LLPI…SILL, LLVG…AVYF, VLAI…ISFI, RLLA…DVVA, and ELPI…WLLI.

This sequence belongs to the binding-protein-dependent transport system permease family. FecCD subfamily. In terms of assembly, the complex is composed of two ATP-binding proteins (BtuD), two transmembrane proteins (BtuC) and a solute-binding protein (BtuF).

Its subcellular location is the cell inner membrane. Its function is as follows. Part of the ABC transporter complex BtuCDF involved in vitamin B12 import. Involved in the translocation of the substrate across the membrane. The chain is Vitamin B12 import system permease protein BtuC from Yersinia pseudotuberculosis serotype O:1b (strain IP 31758).